Reading from the N-terminus, the 189-residue chain is Large ribosomal subunit protein uL6 (189 aa).

The protein belongs to the universal ribosomal protein uL6 family. Part of the 50S ribosomal subunit.

In terms of biological role, this protein binds to the 23S rRNA, and is important in its secondary structure. It is located near the subunit interface in the base of the L7/L12 stalk, and near the tRNA binding site of the peptidyltransferase center. This is Large ribosomal subunit protein uL6 from Bacteroides fragilis (strain ATCC 25285 / DSM 2151 / CCUG 4856 / JCM 11019 / LMG 10263 / NCTC 9343 / Onslow / VPI 2553 / EN-2).